We begin with the raw amino-acid sequence, 121 residues long: Histone H2B (121 aa).

The tract at residues 1-27 is disordered; it reads MAPKKAPAAAEKKVKKAPTTEKKNKKK. A N,N,N-trimethylalanine modification is found at Ala2. 2 positions are modified to N6-acetyllysine: Lys5 and Lys41. Residue Lys115 forms a Glycyl lysine isopeptide (Lys-Gly) (interchain with G-Cter in ubiquitin) linkage.

Belongs to the histone H2B family. As to quaternary structure, the nucleosome is a histone octamer containing two molecules each of H2A, H2B, H3 and H4 assembled in one H3-H4 heterotetramer and two H2A-H2B heterodimers. The octamer wraps approximately 147 bp of DNA. In terms of processing, monoubiquitination of Lys-115 gives a specific tag for epigenetic transcriptional activation and is also prerequisite for histone H3 'Lys-4' and 'Lys-79' methylation. Acetylation occurs almost exclusively in the MAC.

The protein resides in the nucleus. It localises to the chromosome. Its function is as follows. Core component of nucleosome. Nucleosomes wrap and compact DNA into chromatin, limiting DNA accessibility to the cellular machineries which require DNA as a template. Histones thereby play a central role in transcription regulation, DNA repair, DNA replication and chromosomal stability. DNA accessibility is regulated via a complex set of post-translational modifications of histones, also called histone code, and nucleosome remodeling. This chain is Histone H2B, found in Tetrahymena pyriformis.